The primary structure comprises 237 residues: Octanoyltransferase (237 aa).

Residues 27 to 210 (SGGDDILLLL…EFYHIFQPAG (184 aa)) form the BPL/LPL catalytic domain. Residues 72–79 (RGGNVTCH), 139–141 (SLG), and 152–154 (GMA) each bind substrate. C170 serves as the catalytic Acyl-thioester intermediate.

It belongs to the LipB family.

It is found in the cytoplasm. The catalysed reaction is octanoyl-[ACP] + L-lysyl-[protein] = N(6)-octanoyl-L-lysyl-[protein] + holo-[ACP] + H(+). It functions in the pathway protein modification; protein lipoylation via endogenous pathway; protein N(6)-(lipoyl)lysine from octanoyl-[acyl-carrier-protein]: step 1/2. Functionally, catalyzes the transfer of endogenously produced octanoic acid from octanoyl-acyl-carrier-protein onto the lipoyl domains of lipoate-dependent enzymes. Lipoyl-ACP can also act as a substrate although octanoyl-ACP is likely to be the physiological substrate. This chain is Octanoyltransferase, found in Desulfovibrio desulfuricans (strain ATCC 27774 / DSM 6949 / MB).